A 165-amino-acid polypeptide reads, in one-letter code: Large ribosomal subunit protein uL10 (165 aa).

Belongs to the universal ribosomal protein uL10 family. In terms of assembly, part of the ribosomal stalk of the 50S ribosomal subunit. The N-terminus interacts with L11 and the large rRNA to form the base of the stalk. The C-terminus forms an elongated spine to which L12 dimers bind in a sequential fashion forming a multimeric L10(L12)X complex.

Its function is as follows. Forms part of the ribosomal stalk, playing a central role in the interaction of the ribosome with GTP-bound translation factors. The sequence is that of Large ribosomal subunit protein uL10 from Enterobacter sp. (strain 638).